The chain runs to 277 residues: MFPAMLNVGLGLRRGLLPELLAMEAGAVDFLECAPENWIAVGGAYGKGLAQLAERFAVTCHGLSLSLGGSAPLDRHFLEQTRQFLDRYQVRLYSEHLSYCSDDGHLYDLMPIPFTDEAVRHVAARIRQAQEQLERRIAVENISYYAAPYQAMSELDFIQAVLEEADCDLLLDVNNVYVNACNHGYDAQQFLAGLPQARVAGMHVAGHYDEAPDLKVDTHGAAVKEDVWALYASACARFGVQPTVLERDFNYPPLAELLAETARMRAVQCAAGGQADE.

This sequence belongs to the UPF0276 family.

The polypeptide is UPF0276 protein PP_2398 (Pseudomonas putida (strain ATCC 47054 / DSM 6125 / CFBP 8728 / NCIMB 11950 / KT2440)).